The chain runs to 555 residues: MEYDYIIIGAGSAGNVLATRLTEDADVSVLLLEAGGPDYRMDFRTQMPAALAFPLQGRRYNWAYETDPEPHMNNRRMECGRGKGLGGSSLINGMCYIRGNAMDFDNWAKAPGLEDWSYLDCLPYFRKAETRDIGPNDFHGGDGPVSVTTPKAGNNELFHAMVEAGVQAGYPRTEDLNGYQQEGFGPMDRTVTPKGRRASTARGYLDQARSRPNLKIVTHALTDRIRFDGKRAVGVDYLQGEAKDVTSARARREVLLCAGAIASPQILQRSGVGPAALLNRLDIDLVHELPGVGENLQDHLEMYLQYACKKPVSLYPALQWFNQPKIGAEWLFNGSGIGASNQFEAGGFIRSREEFAWPNIQYHFLPVAINYNGSNAVKEHGFQAHVGSMRSPSRGRVQVKSKDPRQHPSILFNYMATEQDWQEFRDAIRITREIMAQPALDEYRGREISPGPEVQTDEQLDAFVREHAETAFHPSCSCKMGEDEMAVVDGQGRVHGLEGLRVVDASIMPLIITGNLNATTIMIAEKIADRIRQRTPLPRSTAEYYVAGNAPARKQ.

4–33 (DYIIIGAGSAGNVLATRLTEDADVSVLLLE) serves as a coordination point for FAD. The disordered stretch occupies residues 180–202 (QQEGFGPMDRTVTPKGRRASTAR). Histidine 473 functions as the Proton acceptor in the catalytic mechanism.

The protein belongs to the GMC oxidoreductase family. It depends on FAD as a cofactor.

It catalyses the reaction choline + A = betaine aldehyde + AH2. The enzyme catalyses betaine aldehyde + NAD(+) + H2O = glycine betaine + NADH + 2 H(+). It functions in the pathway amine and polyamine biosynthesis; betaine biosynthesis via choline pathway; betaine aldehyde from choline (cytochrome c reductase route): step 1/1. Involved in the biosynthesis of the osmoprotectant glycine betaine. Catalyzes the oxidation of choline to betaine aldehyde and betaine aldehyde to glycine betaine at the same rate. This is Oxygen-dependent choline dehydrogenase from Serratia proteamaculans (strain 568).